Consider the following 305-residue polypeptide: Tetraspanin-12 (305 aa).

Topologically, residues 1-12 are cytoplasmic; the sequence is MAREDSVRCLRC. 2 S-palmitoyl cysteine lipidation sites follow: Cys9 and Cys12. The chain crosses the membrane as a helical span at residues 13–33; sequence LLYALNLLFWLMSISVLGVSA. The Extracellular segment spans residues 34–59; sequence WIRDYLNNVLTLTAETRVEEAVILTY. The chain crosses the membrane as a helical span at residues 60–80; that stretch reads FPVVHPVMIAVCCFLILVGML. At 81–89 the chain is on the cytoplasmic side; the sequence is GYCGTVKRN. Cys83 carries the S-palmitoyl cysteine lipid modification. A helical membrane pass occupies residues 90–110; that stretch reads LLLLVWYFGSLLVIFCVELAC. Topologically, residues 111 to 224 are extracellular; sequence GVWTYEQEIT…RGTKQLQVLR (114 aa). Residues 225–245 traverse the membrane as a helical segment; it reads FLGISIGVTQILAMILTITLL. The Cytoplasmic segment spans residues 246 to 305; that stretch reads WALYYDRRDPGADQIMSLKNDTSQQLSCHSVELLKPSLTGIFEHTSMANSFNTHFEMEEL.

It belongs to the tetraspanin (TM4SF) family. In terms of assembly, component of a complex, at least composed of TSPAN12, FZD4 and norrin (NDP). In terms of processing, palmitoylated; required for interaction with ADAM10. The precise position of palmitoylated residues is unclear and occurs either on Cys-9, Cys-12 and/or Cys-83.

It is found in the cell membrane. In terms of biological role, regulator of cell surface receptor signal transduction. Plays a central role in retinal vascularization by regulating norrin (NDP) signal transduction. Acts in concert with norrin (NDP) to promote FZD4 multimerization and subsequent activation of FZD4, leading to promote accumulation of beta-catenin (CTNNB1) and stimulate LEF/TCF-mediated transcriptional programs. Suprisingly, it only activates the norrin (NDP)-dependent activation of FZD4, while it does not activate the Wnt-dependent activation of FZD4, suggesting the existence of a Wnt-independent signaling that also promote accumulation the beta-catenin (CTNNB1). This chain is Tetraspanin-12 (TSPAN12), found in Gallus gallus (Chicken).